Here is a 305-residue protein sequence, read N- to C-terminus: Olfactory receptor 9G9 (305 aa).

Residues 1–27 (MQRSNHTVTEFILLGFTTDPGMQLGLF) are Extracellular-facing. Asn5 carries an N-linked (GlcNAc...) asparagine glycan. Residues 28 to 48 (VVFLGVYSLTVVGNSTLIVLI) form a helical membrane-spanning segment. Residues 49 to 64 (CNDSHLHTPMYFVVGN) are Cytoplasmic-facing. The chain crosses the membrane as a helical span at residues 65 to 85 (LSFLDLWYSSVYTPKILVICI). Residues 86 to 96 (SEDKSISFAGC) are Extracellular-facing. Cysteines 96 and 178 form a disulfide. A helical transmembrane segment spans residues 97–117 (LCQFFFSAGLAYSECCLLAAM). Over 118-138 (AYDRYVAISKPLLYAQAMSIK) the chain is Cytoplasmic. A helical transmembrane segment spans residues 139–159 (LCALLVAVSYCGGFINSSIIT). The Extracellular segment spans residues 160-200 (KKTFSFNFCCENIIDDFFCDLLPLVKLACGEKGCYKFLMYF). A helical membrane pass occupies residues 201–221 (LLASNVICPAVLILASYLFII). The Cytoplasmic portion of the chain corresponds to 222-239 (TSVLRISSSQGRLKAFST). The helical transmembrane segment at 240-260 (CSSHLTSVTLYYGSILYIYAL) threads the bilayer. The Extracellular portion of the chain corresponds to 261–271 (PRSSYSFDMDK). A helical membrane pass occupies residues 272 to 291 (IVSTFYTEVLPMLNPMIYSL). Topologically, residues 292 to 305 (RNKDVKEALKKLLP) are cytoplasmic.

It belongs to the G-protein coupled receptor 1 family.

It localises to the cell membrane. Odorant receptor. The polypeptide is Olfactory receptor 9G9 (OR9G9) (Homo sapiens (Human)).